The sequence spans 327 residues: Tetraacyldisaccharide 4'-kinase (327 aa).

52–59 (TLGGAGKT) contacts ATP.

It belongs to the LpxK family.

The enzyme catalyses a lipid A disaccharide + ATP = a lipid IVA + ADP + H(+). The protein operates within glycolipid biosynthesis; lipid IV(A) biosynthesis; lipid IV(A) from (3R)-3-hydroxytetradecanoyl-[acyl-carrier-protein] and UDP-N-acetyl-alpha-D-glucosamine: step 6/6. Transfers the gamma-phosphate of ATP to the 4'-position of a tetraacyldisaccharide 1-phosphate intermediate (termed DS-1-P) to form tetraacyldisaccharide 1,4'-bis-phosphate (lipid IVA). This chain is Tetraacyldisaccharide 4'-kinase, found in Methylorubrum extorquens (strain PA1) (Methylobacterium extorquens).